We begin with the raw amino-acid sequence, 392 residues long: Probable protein phosphatase 2C 29 (392 aa).

In terms of domain architecture, PPM-type phosphatase spans D44 to L353. Residues D75, G76, D285, and D344 each contribute to the Mn(2+) site. Residues A360–R392 form a disordered region.

Belongs to the PP2C family. Requires Mg(2+) as cofactor. It depends on Mn(2+) as a cofactor.

It carries out the reaction O-phospho-L-seryl-[protein] + H2O = L-seryl-[protein] + phosphate. The catalysed reaction is O-phospho-L-threonyl-[protein] + H2O = L-threonyl-[protein] + phosphate. This is Probable protein phosphatase 2C 29 from Oryza sativa subsp. japonica (Rice).